A 147-amino-acid chain; its full sequence is Myoglobin (147 aa).

Residues 2 to 141 form the Globin domain; the sequence is ADHDLVLKCW…VIGDIDGYYK (140 aa). Residue His60 coordinates nitrite. His60 lines the O2 pocket. His89 contacts heme b.

Belongs to the globin family. As to quaternary structure, monomeric.

It localises to the cytoplasm. It is found in the sarcoplasm. It carries out the reaction Fe(III)-heme b-[protein] + nitric oxide + H2O = Fe(II)-heme b-[protein] + nitrite + 2 H(+). The enzyme catalyses H2O2 + AH2 = A + 2 H2O. Functionally, monomeric heme protein which primary function is to store oxygen and facilitate its diffusion within muscle tissues. Reversibly binds oxygen through a pentacoordinated heme iron and enables its timely and efficient release as needed during periods of heightened demand. Depending on the oxidative conditions of tissues and cells, and in addition to its ability to bind oxygen, it also has a nitrite reductase activity whereby it regulates the production of bioactive nitric oxide. Under stress conditions, like hypoxia and anoxia, it also protects cells against reactive oxygen species thanks to its pseudoperoxidase activity. This chain is Myoglobin (mb), found in Danio rerio (Zebrafish).